The chain runs to 802 residues: E3 ubiquitin-protein ligase RNF10 (802 aa).

Low complexity-rich tracts occupy residues 1–31 (MPQS…SGSS), 78–90 (SNQS…QKSK), and 104–113 (SKPFSSSSNG). The interval 1–134 (MPQSSPSTAA…AEFSPAQFSG (134 aa)) is disordered. Ser-5 carries the post-translational modification Phosphoserine. Ser-110 bears the Phosphoserine mark. The span at 114–124 (GRRDEVAEAQR) shows a compositional bias: basic and acidic residues. Ser-128 is modified (phosphoserine). The RING-type zinc-finger motif lies at 225–267 (CPICLYPPTAAKITRCGHIFCWACILHYLSLSERTWSKCPICY). Polar residues predominate over residues 645-654 (DSALGPTSTE). Disordered stretches follow at residues 645-664 (DSAL…LSPL), 716-753 (DGWP…VPSF), and 767-802 (KLDT…VHTK). Basic and acidic residues predominate over residues 716 to 728 (DGWPKAAPKKDDN). Residues 793 to 802 (LFSTSVVHTK) are compositionally biased toward polar residues.

This sequence belongs to the RNF10 family. As to quaternary structure, interacts with MEOX2.

It localises to the cytoplasm. The protein localises to the nucleus. The enzyme catalyses S-ubiquitinyl-[E2 ubiquitin-conjugating enzyme]-L-cysteine + [acceptor protein]-L-lysine = [E2 ubiquitin-conjugating enzyme]-L-cysteine + N(6)-ubiquitinyl-[acceptor protein]-L-lysine.. Its pathway is protein modification; protein ubiquitination. In terms of biological role, E3 ubiquitin-protein ligase that catalyzes monoubiquitination of 40S ribosomal proteins RPS2/us5 and RPS3/us3 in response to ribosome stalling. Part of a ribosome quality control that takes place when ribosomes have stalled during translation initiation (iRQC): RNF10 acts by mediating monoubiquitination of RPS2/us5 and RPS3/us3, promoting their degradation by the proteasome. Also promotes ubiquitination of 40S ribosomal proteins in response to ribosome stalling during translation elongation. The action of RNF10 in iRQC is counteracted by USP10. May also act as a transcriptional factor involved in the regulation of MAG (Myelin-associated glycoprotein) expression. Acts as a regulator of Schwann cell differentiation and myelination. The chain is E3 ubiquitin-protein ligase RNF10 from Rattus norvegicus (Rat).